The chain runs to 330 residues: GMP reductase (330 aa).

Residue Cys180 is the Thioimidate intermediate of the active site. 209-232 (LIADGGIRHNGDIAKSVRFGASMV) contributes to the NADP(+) binding site.

It belongs to the IMPDH/GMPR family. GuaC type 2 subfamily.

It carries out the reaction IMP + NH4(+) + NADP(+) = GMP + NADPH + 2 H(+). In terms of biological role, catalyzes the irreversible NADPH-dependent deamination of GMP to IMP. It functions in the conversion of nucleobase, nucleoside and nucleotide derivatives of G to A nucleotides, and in maintaining the intracellular balance of A and G nucleotides. This Lactobacillus gasseri (strain ATCC 33323 / DSM 20243 / BCRC 14619 / CIP 102991 / JCM 1131 / KCTC 3163 / NCIMB 11718 / NCTC 13722 / AM63) protein is GMP reductase.